We begin with the raw amino-acid sequence, 350 residues long: 3'-hydroxy-N-methyl-(S)-coclaurine 4'-O-methyltransferase (350 aa).

S-adenosyl-L-methionine-binding residues include Gly-196, Asp-219, Asp-239, Met-240, and Lys-253. His-257 acts as the Proton acceptor in catalysis.

The protein belongs to the class I-like SAM-binding methyltransferase superfamily. Cation-independent O-methyltransferase family. COMT subfamily. As to quaternary structure, homodimer.

The catalysed reaction is (S)-3'-hydroxy-N-methylcoclaurine + S-adenosyl-L-methionine = (S)-reticuline + S-adenosyl-L-homocysteine + H(+). The protein operates within alkaloid biosynthesis; (S)-reticuline biosynthesis; (S)-reticuline from (S)-norcoclaurine: step 4/4. Functionally, catalyzes the transfer of the methyl group to the 4'-hydroxyl group of 3'-hydroxy-N-methylcoclaurine to form reticuline. The chain is 3'-hydroxy-N-methyl-(S)-coclaurine 4'-O-methyltransferase from Coptis japonica (Japanese goldthread).